A 699-amino-acid polypeptide reads, in one-letter code: D-(-)-3-hydroxybutyrate oligomer hydrolase (699 aa).

The first 33 residues, 1–33 (MTAIRGGSRRAPGLALALLGGVLLGACHGDENA), serve as a signal peptide directing secretion. Serine 311 serves as the catalytic Charge relay system.

The protein belongs to the D-(-)-3-hydroxybutyrate oligomer hydrolase family.

It localises to the secreted. It carries out the reaction (3R)-hydroxybutanoate dimer + H2O = 2 (R)-3-hydroxybutanoate + H(+). It functions in the pathway lipid metabolism; butanoate metabolism. Functionally, participates in the degradation of poly-3-hydroxybutyrate (PHB). It works downstream of poly(3-hydroxybutyrate) depolymerase, hydrolyzing D(-)-3-hydroxybutyrate oligomers of various length (3HB-oligomers) into 3HB-monomers. The sequence is that of D-(-)-3-hydroxybutyrate oligomer hydrolase from Burkholderia mallei (strain ATCC 23344).